We begin with the raw amino-acid sequence, 202 residues long: Ras-related protein Rab-18 (202 aa).

Residues Ser-18, Gly-21, Lys-22, Ser-23, Ser-24, Asp-35, Pro-36, Thr-41, Gly-67, Lys-124, Asp-126, and Ala-153 each contribute to the GTP site. Residues 38 to 46 (QAATIGVDF) carry the Effector region motif. Residues Cys-198 and Cys-200 are each lipidated (S-geranylgeranyl cysteine).

It belongs to the small GTPase superfamily. Rab family.

Its subcellular location is the cell membrane. The catalysed reaction is GTP + H2O = GDP + phosphate + H(+). In terms of biological role, the small GTPases Rab are key regulators of intracellular membrane trafficking, from the formation of transport vesicles to their fusion with membranes. Rabs cycle between an inactive GDP-bound form and an active GTP-bound form that is able to recruit to membranes different sets of downstream effectors directly responsible for vesicle formation, movement, tethering and fusion. The sequence is that of Ras-related protein Rab-18 (RAB18A) from Lymnaea stagnalis (Great pond snail).